The chain runs to 415 residues: Peptide chain release factor subunit 1-2 (415 aa).

Belongs to the eukaryotic release factor 1 family. Heterodimer of two subunits, one of which binds GTP.

It localises to the cytoplasm. Its function is as follows. Directs the termination of nascent peptide synthesis (translation) in response to the termination codons UAA, UAG and UGA. The sequence is that of Peptide chain release factor subunit 1-2 from Methanosarcina acetivorans (strain ATCC 35395 / DSM 2834 / JCM 12185 / C2A).